We begin with the raw amino-acid sequence, 343 residues long: UDP-3-O-acylglucosamine N-acyltransferase 2 (343 aa).

Histidine 251 (proton acceptor) is an active-site residue.

Belongs to the transferase hexapeptide repeat family. LpxD subfamily. Homotrimer.

It carries out the reaction a UDP-3-O-[(3R)-3-hydroxyacyl]-alpha-D-glucosamine + a (3R)-hydroxyacyl-[ACP] = a UDP-2-N,3-O-bis[(3R)-3-hydroxyacyl]-alpha-D-glucosamine + holo-[ACP] + H(+). Its pathway is bacterial outer membrane biogenesis; LPS lipid A biosynthesis. In terms of biological role, catalyzes the N-acylation of UDP-3-O-acylglucosamine using 3-hydroxyacyl-ACP as the acyl donor. Is involved in the biosynthesis of lipid A, a phosphorylated glycolipid that anchors the lipopolysaccharide to the outer membrane of the cell. This is UDP-3-O-acylglucosamine N-acyltransferase 2 from Legionella pneumophila (strain Lens).